The following is a 335-amino-acid chain: MRTLAVETSCDETALAIYDDQKGVLGNVILSQAVVHSPFGGVVPELSAREHTRNILPIFDRLLKESRINLEEIDFISFTLTPGLILSLVVGVAFAKALAYEYRKPLVPVHHLEGHIYSVFLEKKVEYPFLALIISGGHTDLYLVRDFGRYDFLGGTLDDAVGEAYDKVAKMLGLGYPGGPIIDRLAKEGKKLYPLPKPLMEEGNLNFSFSGLKTAILNLLKKEKNVRKEDIAYSFQETVVEILLEKSLWAMKKTGIKRLVVVGGVSANSRLREVFKKASQEYGFELYIPHPSLSTDNALMIAYAGMERFKRGVVAPLDVNPQPNIPLEEFGRIWT.

2 residues coordinate Fe cation: His111 and His115. Residues 133-137, Asp166, Gly179, Asp183, and Asn268 contribute to the substrate site; that span reads IISGG. Asp296 contacts Fe cation.

Belongs to the KAE1 / TsaD family. Fe(2+) is required as a cofactor.

It localises to the cytoplasm. It catalyses the reaction L-threonylcarbamoyladenylate + adenosine(37) in tRNA = N(6)-L-threonylcarbamoyladenosine(37) in tRNA + AMP + H(+). Required for the formation of a threonylcarbamoyl group on adenosine at position 37 (t(6)A37) in tRNAs that read codons beginning with adenine. Is involved in the transfer of the threonylcarbamoyl moiety of threonylcarbamoyl-AMP (TC-AMP) to the N6 group of A37, together with TsaE and TsaB. TsaD likely plays a direct catalytic role in this reaction. In Aquifex aeolicus (strain VF5), this protein is tRNA N6-adenosine threonylcarbamoyltransferase.